Reading from the N-terminus, the 800-residue chain is Signaling protein YkoW (800 aa).

7 consecutive transmembrane segments (helical) span residues V5 to L27, W44 to A66, E76 to V98, L103 to I125, I135 to L157, V178 to F200, and T215 to S237. One can recognise an MHYT domain in the interval Y7–H201. Positions Q255 to A319 constitute a PAS domain. Positions Y402–F536 constitute a GGDEF domain. One can recognise an EAL domain in the interval K545 to P798.

It is found in the cell membrane. Its function is as follows. Probable signaling protein whose physiological role is not yet known. In Bacillus subtilis (strain 168), this protein is Signaling protein YkoW (ykoW).